Reading from the N-terminus, the 251-residue chain is Aspartate/glutamate leucyltransferase (251 aa).

The protein belongs to the R-transferase family. Bpt subfamily.

The protein resides in the cytoplasm. It carries out the reaction N-terminal L-glutamyl-[protein] + L-leucyl-tRNA(Leu) = N-terminal L-leucyl-L-glutamyl-[protein] + tRNA(Leu) + H(+). The catalysed reaction is N-terminal L-aspartyl-[protein] + L-leucyl-tRNA(Leu) = N-terminal L-leucyl-L-aspartyl-[protein] + tRNA(Leu) + H(+). Functionally, functions in the N-end rule pathway of protein degradation where it conjugates Leu from its aminoacyl-tRNA to the N-termini of proteins containing an N-terminal aspartate or glutamate. This chain is Aspartate/glutamate leucyltransferase, found in Xanthomonas oryzae pv. oryzae (strain MAFF 311018).